The chain runs to 209 residues: Ubiquitin-conjugating enzyme E2 S (209 aa).

Residues 14-160 (QTIRQVMREL…ARMMTEIHAQ (147 aa)) form the UBC core domain. The active-site Glycyl thioester intermediate is the Cys-98. The interval 168–194 (AVGDAKDDGGPSTKKHAGLDKKLQDKK) is disordered. Residues 184-194 (AGLDKKLQDKK) show a composition bias toward basic and acidic residues.

The protein belongs to the ubiquitin-conjugating enzyme family.

It carries out the reaction S-ubiquitinyl-[E1 ubiquitin-activating enzyme]-L-cysteine + [E2 ubiquitin-conjugating enzyme]-L-cysteine = [E1 ubiquitin-activating enzyme]-L-cysteine + S-ubiquitinyl-[E2 ubiquitin-conjugating enzyme]-L-cysteine.. Its pathway is protein modification; protein ubiquitination. In terms of biological role, catalyzes the covalent attachment of ubiquitin to other proteins. Acts as an essential factor of the anaphase promoting complex/cyclosome (APC/C), a cell cycle-regulated ubiquitin ligase that controls progression through mitosis. Acts by specifically elongating polyubiquitin chains initiated by the E2 enzyme vih/UbcH10 on APC/C substrates, enhancing the degradation of APC/C substrates by the proteasome and promoting mitotic exit. In Drosophila melanogaster (Fruit fly), this protein is Ubiquitin-conjugating enzyme E2 S.